Consider the following 225-residue polypeptide: Imidazole glycerol phosphate synthase subunit HisH (225 aa).

Residues 3 to 225 (TIAIVDYGMG…LYRNFVDWQP (223 aa)) enclose the Glutamine amidotransferase type-1 domain. Cys-82 serves as the catalytic Nucleophile. Active-site residues include His-205 and Glu-207.

As to quaternary structure, heterodimer of HisH and HisF.

Its subcellular location is the cytoplasm. It catalyses the reaction 5-[(5-phospho-1-deoxy-D-ribulos-1-ylimino)methylamino]-1-(5-phospho-beta-D-ribosyl)imidazole-4-carboxamide + L-glutamine = D-erythro-1-(imidazol-4-yl)glycerol 3-phosphate + 5-amino-1-(5-phospho-beta-D-ribosyl)imidazole-4-carboxamide + L-glutamate + H(+). The catalysed reaction is L-glutamine + H2O = L-glutamate + NH4(+). It functions in the pathway amino-acid biosynthesis; L-histidine biosynthesis; L-histidine from 5-phospho-alpha-D-ribose 1-diphosphate: step 5/9. Its function is as follows. IGPS catalyzes the conversion of PRFAR and glutamine to IGP, AICAR and glutamate. The HisH subunit catalyzes the hydrolysis of glutamine to glutamate and ammonia as part of the synthesis of IGP and AICAR. The resulting ammonia molecule is channeled to the active site of HisF. The protein is Imidazole glycerol phosphate synthase subunit HisH of Bordetella bronchiseptica (strain ATCC BAA-588 / NCTC 13252 / RB50) (Alcaligenes bronchisepticus).